A 364-amino-acid chain; its full sequence is Probable secreted lipase phiG (364 aa).

The signal sequence occupies residues 1 to 18 (MMPFMDLILSILVSSVLL). Residue asparagine 49 is glycosylated (N-linked (GlcNAc...) asparagine). Serine 203 (nucleophile) is an active-site residue. Asparagine 262 is a glycosylation site (N-linked (GlcNAc...) asparagine).

This sequence belongs to the AB hydrolase superfamily.

It is found in the secreted. It catalyses the reaction a carboxylic ester + H2O = an alcohol + a carboxylate + H(+). Its function is as follows. Part of the gene cluster that mediates the biosynthesis of the antihypercholesterolemic agents phomoidrides which are dimeric anhydrides. The function of phiG within the pathway has still to be determined. The pathway begins with the highly reducing polyketide synthase phiA that catalyzes the formation of a C12-fatty acyl-ACP, starting from one acetate and 5 malonate units. The hydrolase phiM is involved in the release of the C12-fatty acyl chain from phiA. The alkylcitrate synthase (ACS) phiJ and the alkylcitrate dehydratase (ACDH) phiI then give rise to decarboxylated monomeric anhydrides by coupling the C12-fatty acyl chain with oxalacetic acid. The cyclase phiC is responsible for the dimerization of the monomeric anhydrides which leads to the production of prephomoidride that contains the characteristic bicyclo[4.3.1]deca-1,6-diene system of phomoidrides. Iterative oxidation catalyzed by the alpha-ketoglutarate-dependent dioxygenase phiK produced then phomoidride A. Finally, the methyltransferase phiE converts phomoidride A to phomoidride B via an acetalization reaction. The phosphatidylethanolamine-binding protein phiB and phiN are not essential for dimerization and their functions have still to be determined. This Fungal sp. (strain ATCC 74256) protein is Probable secreted lipase phiG.